The sequence spans 92 residues: Large ribosomal subunit protein bL28 (92 aa).

Belongs to the bacterial ribosomal protein bL28 family.

This is Large ribosomal subunit protein bL28 from Borrelia hermsii (strain HS1 / DAH).